We begin with the raw amino-acid sequence, 103 residues long: Trp operon repressor homolog (103 aa).

The DNA-binding element occupies 59-82 (QRQISQMLGVGIATITRGSNELKS).

It belongs to the TrpR family. Homodimer.

It is found in the cytoplasm. Its function is as follows. This protein is an aporepressor. When complexed with L-tryptophan it binds the operator region of the trp operon and prevents the initiation of transcription. This chain is Trp operon repressor homolog, found in Vibrio parahaemolyticus serotype O3:K6 (strain RIMD 2210633).